The primary structure comprises 192 residues: Fe/S biogenesis protein NfuA (192 aa).

[4Fe-4S] cluster is bound by residues cysteine 149 and cysteine 152.

The protein belongs to the NfuA family. In terms of assembly, homodimer. [4Fe-4S] cluster is required as a cofactor.

In terms of biological role, involved in iron-sulfur cluster biogenesis. Binds a 4Fe-4S cluster, can transfer this cluster to apoproteins, and thereby intervenes in the maturation of Fe/S proteins. Could also act as a scaffold/chaperone for damaged Fe/S proteins. The sequence is that of Fe/S biogenesis protein NfuA from Shewanella oneidensis (strain ATCC 700550 / JCM 31522 / CIP 106686 / LMG 19005 / NCIMB 14063 / MR-1).